Reading from the N-terminus, the 132-residue chain is Pro-MCH 1 (132 aa).

Residues 1–24 (MRHYVLSISFAVALFLECYTPSTA) form the signal peptide. A disulfide bridge connects residues Cys120 and Cys129.

This sequence belongs to the melanin-concentrating hormone family. As to expression, pituitary gland. Produced in neurons of lateral basal hypothalamus which project both to the brain and to the neural lobe of the pituitary gland from where MCH is released.

Its function is as follows. Plays a role in skin pigmentation by antagonizing the action of melanotropin alpha. Induces melanin concentration within the melanophores. May participate in the control of the hypothalamo-pituitary adrenal gland axis by inhibiting the release of ACTH. The protein is Pro-MCH 1 (mch1) of Oncorhynchus keta (Chum salmon).